We begin with the raw amino-acid sequence, 821 residues long: G-type lectin S-receptor-like serine/threonine-protein kinase SD2-5 (821 aa).

The signal sequence occupies residues 1 to 21; it reads MRGVFIVIVTCLVFLPDPLRA. Topologically, residues 22-429 are extracellular; the sequence is GVASIGSITP…NGEDDGKHFP (408 aa). The 116-residue stretch at 33–148 folds into the Bulb-type lectin domain; it reads FGGSQMNYIN…DGTSIWESFD (116 aa). N-linked (GlcNAc...) asparagine glycosylation is found at Asn-51, Asn-121, Asn-174, and Asn-248. Residues 280 to 314 enclose the EGF-like; atypical domain; that stretch reads PSDLCGTPEPCGPYYVCSGSKVCGCVSGLSRARSD. Intrachain disulfides connect Cys-284–Cys-296 and Cys-290–Cys-302. The 89-residue stretch at 323-411 folds into the PAN domain; that stretch reads CKKTKDNATL…SGFVSYIKIA (89 aa). Residues Asn-329, Asn-370, and Asn-380 are each glycosylated (N-linked (GlcNAc...) asparagine). Intrachain disulfides connect Cys-363-Cys-385 and Cys-367-Cys-373. A helical membrane pass occupies residues 430–450; that stretch reads YVVIIVVVTVFIIAVLIFVAF. Residues 451–821 lie on the Cytoplasmic side of the membrane; it reads RIHKRKKMIL…LSAVRLSGPR (371 aa). Positions 493–768 constitute a Protein kinase domain; that stretch reads NNFSVKLGQG…KVVQMLEGVF (276 aa). ATP contacts are provided by residues 499-507 and Lys-521; that span reads LGQGGFGSV. The tract at residues 581 to 599 is caM-binding; it reads KDGDVLLDWDTRFNIALGT. Catalysis depends on Asp-618, which acts as the Proton acceptor. The residue at position 635 (Ser-635) is a Phosphoserine. Thr-652 carries the phosphothreonine modification.

Belongs to the protein kinase superfamily. Ser/Thr protein kinase family. In terms of assembly, interacts with PUB9, PUB13, PUB14 and PUB29.

It is found in the membrane. It catalyses the reaction L-seryl-[protein] + ATP = O-phospho-L-seryl-[protein] + ADP + H(+). The enzyme catalyses L-threonyl-[protein] + ATP = O-phospho-L-threonyl-[protein] + ADP + H(+). The protein is G-type lectin S-receptor-like serine/threonine-protein kinase SD2-5 (SD25) of Arabidopsis thaliana (Mouse-ear cress).